An 819-amino-acid polypeptide reads, in one-letter code: MSRFFLKTYEYDSTSSGEEEDLLSQSEEDLVSSSSEEELSDDSFFNDSDESSDNDEDNDSDSKPYGPDWFKKPEFRKGGGSGANKFLKSTNYSSDEDSSDEEDGKKVVKSAKEKLLDEMKSIYQKIDSAEAQQDWESLLNHLETILKLYTKAQQQNYGTPNIFVKSLARFEDAVSATSQDEIKNKAVARAYNTTKQRVKKLIRENETSVKAYRENPEDFDKEPVLDADIDSRDVSATPFSLSGKKNLDLASVANNISELDFFKTLNIIIDSRGKKNTDHTEQIKTTEELLKIAKTPYEKICTYLNLIPIRFDASVSLSYQPLEQWKASKDNLDGLLEVLEQEIDHYQVTEFAPRNDFIEDEPEANEHGVKEILGSIFSMVERLDDEFSKSLLNIDTRSSEYMERLRDEQSIYNLIIRSQLYFERVTAEEHRDRLLARVFNRRLEHIYYKSDKLISIMETVAWKQIREGTASLESSFVRLNESDSADADYNFKVISELSDFLIKQKSNNVFNYRKGTLYKTYYIALNQEYAPAKKIMLSSDIAKFISGSDAALQILYNRCVIQLGLAAFKAGLINECHQVLNGLCINPHLREILGQQSLQRANANSNVVQGAPVEQLCLPFHQHINLDLIDTVYMTCSLLLDVPHMAAYYSGIKVKRIPVFQKSIRRILESSEKAIFHGPPETLRDHILYAAKSMQKGDYLQSIEYLRKISVWSLLSKSDDIINQLSEKVQIETLKTYIFTYKRFYSKISISKLSKLFDLDIEKVLAVAQNIINDYEVKAKLDENNEYIIFERGEEITKLEEVAIKLVKETKYHSERLRQ.

A disordered region spans residues 1-106; it reads MSRFFLKTYE…DSSDEEDGKK (106 aa). Composition is skewed to acidic residues over residues 17–41 and 47–59; these read GEEE…ELSD and DSDE…EDND. Positions 620-795 constitute a PCI domain; sequence FHQHINLDLI…EYIIFERGEE (176 aa).

This sequence belongs to the eIF-3 subunit C family. As to quaternary structure, component of the eukaryotic translation initiation factor 3 (eIF-3) complex.

The protein resides in the cytoplasm. In terms of biological role, component of the eukaryotic translation initiation factor 3 (eIF-3) complex, which is involved in protein synthesis of a specialized repertoire of mRNAs and, together with other initiation factors, stimulates binding of mRNA and methionyl-tRNAi to the 40S ribosome. The eIF-3 complex specifically targets and initiates translation of a subset of mRNAs involved in cell proliferation. This is Eukaryotic translation initiation factor 3 subunit C from Kluyveromyces lactis (strain ATCC 8585 / CBS 2359 / DSM 70799 / NBRC 1267 / NRRL Y-1140 / WM37) (Yeast).